A 122-amino-acid polypeptide reads, in one-letter code: AMVNPAAYLQQQQLISSSPLDVVNAPTYLQQQLLQQIIPALTQLAVANPAAYLQQLLPFNQLTVSNSAAYLQQRQQLLNPLVVANPLVAAFLQQQQLLPYNQFSLMNPALSWQQPIVGGAIF.

The protein belongs to the zein family.

Zeins are major seed storage proteins. The chain is Zein-alpha B49 from Zea mays (Maize).